A 2152-amino-acid chain; its full sequence is MSDTPSTGFSIIHPTSSEDQVPPPRHLSLTHPVVAKRISFYKSGDPQFGGVRVVVNPRSFKSFDALLDNLSRKVPLPFGVRNISTPRGRHSITRLEELEDGESYLCSHGRKVQPVDLDKARRRPRPWLSSRAISAQAPPHPVAVAAPGKPRAPRSLVVFRNGDPKTRRTVLLSRRVTQSFEAFLQHLTEVMQRPVVKLYATDGRRVPSLQAVILSSGAVVAAGREPFKPGNYDIQKYLLPARLPGISQRVYPKGNAKSESRKISTHMSSSSRSQIYSVSSEKTHNNDCYLDYSFVPENYLALEKSDSQNLPIYPSEDDIEKSIIFNQDGTMTVEMKVRFRIKEEETIKWTTTVSKTGPSNNDEKSEMSFPGRTESRSSGLKLAACSFSADVSPMERSSDQEGSLPEEINIQTTDEEAETCSSASWENATVDTDITQGTQDQAKHRFYRPPTPGLRRVRQKKSVIGSVTLVSETEVQEKMIGQFSYSEERESGENKSEYHMFAHSCSKMSAVSNKPVLVQINNNDQMEESLLERKKENRLLKSSAISAGVIEITSQKMLEMSHNNGLPSTISNNSIVEEGVVDSMVSDNKTGIKNFRAYDNTNDRFSPISADATHFSSTNSGTDKNISEATASETSSTVTARIDRLINEFAQCGLTKLPKNEKKILSSVASKKKKKSLQQAINSRYQDGQLATKGILNKNERINTRGRIRKEMILQDSDSRLKGGILCEEDLQTSDTVIESNTFCSKSNLNSMISKNFHRNKLNTTQNSKVQGLLTKRKSKSLKKVSLGAPKKREICQGDKVFPHNESKYCKSTFENKSLFHVFNILEQKPKYFYAPQSQAEVASGYLRGMAKKSLVTDSHITLRSQKKQKGDKLKASAVVSKQHATTRANSLASLKKPDFPEDIAHHSVQNYIQSWLQNINPYPTLKPIKSAPVCRNEMSVVNCNNNSFPGNDPHKSSGKINNFVMESNKHITKIASLTGDNLCKEGDKSFIASDTGEEDLHETQVGSLNDAYLVSLHEHCTLSQSAINDRNTKRHIAAEKSGPEKKLVYQEINLARKRQSVEAAIQVDPIEEETPKDLLPVLMLHQLQASVPGISKTQNGVVQMPGSLANVPFHSAICNSSTNLLLAWLLVLNLKGSMNSFCQVDAHKTINKSSETLALLEILKHIAITEEADDLKAAVANLVESTTSHFGLSEKEQDVVPLDLSANCSTVSIQSVPKCSENERTQRISSLDGDCSASEACAPEVCVLEVTCSPCETWTVNKTYPPKETCNPSDTHFPSDGYGVDQTSMNKACFLGEVCSLTDTVFSNKACAQKENHIYEGACPTVETYVPVSVCNTIDFFNSKENTYTDNLESTEELERGDDIQKDLNILTDPEYKNGFNTLVSHQNVSNLSSCRLCLSEKEAELDKKHSSLDDFKNCSLKKFQDENAYTSFDMEEPRTSEEPGSITNSMTSSERNISELESFEELENPDTDIFNTVVNGGEQATEELIQEELEASKTLELIDISGKNVMEEKRRNGIIYEIISKRLATPPSLVFCYDSKQNREKETNEGETKMVKMMVKSMEAGSYSESSPDLKKCIKSPVTSDWSDYRPDSDSEQPYKTSSDDPNDSGELAQEKEYNIGFVKRAIEKLYGKADIIKPSFFPGSTRKSQVCPYNSVEFQCSRKASLYDSEGQSFGSSEQVSTSSPMLQEFQEERQDKCDVNGVRNDYYGGDIVEPGTKQNDHSRILTDIEEGVLIDKGKWLLKENHLLRMSSENPGMCGNADTTSVDTLLDNNSSEVPYSHFGNLAPVPVMDELSSSELEELTQPLELKCNYFNMPHGSDSEPFHEDVHNETCAKERIANHHTEERGNNHQSERVCTSVTHSFTSASNKVYPVSDDAIKNQPLPGSNMIHGTLQEADSLDKLYALCGQHCPILTVIIQPVNEEDRGFAYRKESDIENFLGFYLWMKIHPYLLQTDKKVFREENNKASMRQNHIDNAIGDIFDQFYFNNTFDLMGKRRKQKRINFLELEEEGNLKKFQPDLKERLCMNFLHTSLLVVSNMNSDTQDLSSQTNEMFKAVDENNNLLNTGFQGSRTNLNQIVRENTNCHYFFEMLGQACLLDICQVETSLNISNRNTLEELCMFEGENLFIWEEEDILNLTDLESSREQEDL.

A compositionally biased stretch (polar residues) spans 1–19; the sequence is MSDTPSTGFSIIHPTSSED. The interval 1 to 25 is disordered; that stretch reads MSDTPSTGFSIIHPTSSEDQVPPPR. Doublecortin domains lie at 36 to 118 and 154 to 233; these read KRIS…VDLD and RSLV…GNYD. Disordered regions lie at residues 353–375, 1435–1455, and 1587–1616; these read VSKTGPSNNDEKSEMSFPGRTES, DMEEPRTSEEPGSITNSMTSS, and DWSDYRPDSDSEQPYKTSSDDPNDSGELAQ.

In terms of assembly, interacts (via the doublecortin domains) with microtubules. Interacts with RP1L1. Interacts with MAK.

Its subcellular location is the cytoplasm. The protein resides in the cytoskeleton. It is found in the cilium axoneme. It localises to the cell projection. The protein localises to the cilium. Its subcellular location is the photoreceptor outer segment. In terms of biological role, microtubule-associated protein regulating the stability and length of the microtubule-based axoneme of photoreceptors. Required for the differentiation of photoreceptor cells, it plays a role in the organization of the outer segment of rod and cone photoreceptors ensuring the correct orientation and higher-order stacking of outer segment disks along the photoreceptor axoneme. This chain is Oxygen-regulated protein 1 (RP1), found in Papio hamadryas (Hamadryas baboon).